We begin with the raw amino-acid sequence, 453 residues long: Putative long chain fatty acid-CoA ligase VraA (453 aa).

Belongs to the ATP-dependent AMP-binding enzyme family.

In Staphylococcus epidermidis (strain ATCC 35984 / DSM 28319 / BCRC 17069 / CCUG 31568 / BM 3577 / RP62A), this protein is Putative long chain fatty acid-CoA ligase VraA (vraA).